The following is a 308-amino-acid chain: tRNA dimethylallyltransferase (308 aa).

10–17 contacts ATP; that stretch reads GPTGVGKT. Position 12-17 (12-17) interacts with substrate; that stretch reads TGVGKT. Residues 35 to 38 form an interaction with substrate tRNA region; the sequence is DSRQ.

The protein belongs to the IPP transferase family. Monomer. Mg(2+) serves as cofactor.

The catalysed reaction is adenosine(37) in tRNA + dimethylallyl diphosphate = N(6)-dimethylallyladenosine(37) in tRNA + diphosphate. In terms of biological role, catalyzes the transfer of a dimethylallyl group onto the adenine at position 37 in tRNAs that read codons beginning with uridine, leading to the formation of N6-(dimethylallyl)adenosine (i(6)A). This Fervidobacterium nodosum (strain ATCC 35602 / DSM 5306 / Rt17-B1) protein is tRNA dimethylallyltransferase.